A 49-amino-acid chain; its full sequence is DNA-directed RNA polymerase subunit Rpo12 (49 aa).

Residues Cys-11, Cys-27, and Cys-30 each contribute to the Zn(2+) site.

The protein belongs to the archaeal Rpo12/eukaryotic RPC10 RNA polymerase subunit family. As to quaternary structure, part of the RNA polymerase complex. Requires Zn(2+) as cofactor.

It localises to the cytoplasm. The enzyme catalyses RNA(n) + a ribonucleoside 5'-triphosphate = RNA(n+1) + diphosphate. DNA-dependent RNA polymerase (RNAP) catalyzes the transcription of DNA into RNA using the four ribonucleoside triphosphates as substrates. This is DNA-directed RNA polymerase subunit Rpo12 from Pyrococcus furiosus (strain ATCC 43587 / DSM 3638 / JCM 8422 / Vc1).